The chain runs to 254 residues: Probable membrane transporter protein YjnA (254 aa).

The next 6 helical transmembrane spans lie at 5 to 25, 75 to 95, 105 to 125, 143 to 163, 187 to 207, and 209 to 229; these read IILM…GGAA, AIGS…FPAF, HALG…LFLD, ALTI…SIGS, IAHA…FGSV, and YMLA…GSHL.

The protein belongs to the 4-toluene sulfonate uptake permease (TSUP) (TC 2.A.102) family.

The protein resides in the cell membrane. The chain is Probable membrane transporter protein YjnA (yjnA) from Bacillus subtilis (strain 168).